A 364-amino-acid polypeptide reads, in one-letter code: Aromatic prenyltransferase (364 aa).

A signal peptide spans 1-22; it reads MDRNQWTLALMALMRFAHRAFI. N-linked (GlcNAc...) asparagine glycans are attached at residues N142 and N337.

Belongs to the aromatic prenyltransferase family.

In terms of biological role, prenyltransferase that attaches isoprenoid moieties to carbon atoms of aromatic substrates in an enzyme-catalyzed Friedel-Crafts reaction. The chain is Aromatic prenyltransferase from Talaromyces marneffei (strain ATCC 18224 / CBS 334.59 / QM 7333) (Penicillium marneffei).